Reading from the N-terminus, the 405-residue chain is Glucose-1-phosphate adenylyltransferase 1 (405 aa).

Alpha-D-glucose 1-phosphate is bound by residues Y96, G161, 176–177 (EK), and S194.

The protein belongs to the bacterial/plant glucose-1-phosphate adenylyltransferase family. Homotetramer.

It catalyses the reaction alpha-D-glucose 1-phosphate + ATP + H(+) = ADP-alpha-D-glucose + diphosphate. It participates in glycan biosynthesis; glycogen biosynthesis. Involved in the biosynthesis of ADP-glucose, a building block required for the elongation reactions to produce glycogen. Catalyzes the reaction between ATP and alpha-D-glucose 1-phosphate (G1P) to produce pyrophosphate and ADP-Glc. In Vibrio parahaemolyticus serotype O3:K6 (strain RIMD 2210633), this protein is Glucose-1-phosphate adenylyltransferase 1.